A 269-amino-acid chain; its full sequence is 3-ketodihydrosphingosine reductase (269 aa).

NADPH-binding residues include glycine 10, serine 12, serine 13, glycine 14, lysine 36, and aspartate 50. The short motif at 10–14 (GASSG) is the GXSXG element. The active-site Nucleophile; for lipase activity is the serine 12. Serine 128 functions as the Proton donor in the catalytic mechanism. Tyrosine 142 serves as the catalytic Proton acceptor. NADP(+) contacts are provided by tyrosine 142 and lysine 146. NADPH is bound by residues 142-146 (YSASK) and 175-177 (FNT). Residue lysine 146 is part of the active site. Lysine 146 acts as the Lowers pKa of active site Tyr in catalysis.

The protein belongs to the short-chain dehydrogenases/reductases (SDR) family.

It carries out the reaction sphinganine + NADP(+) = 3-oxosphinganine + NADPH + H(+). Its pathway is lipid metabolism; sphingolipid metabolism. Functionally, catalyzes the reduction of 3'-oxosphinganine (3-ketodihydrosphingosine/KDS) to sphinganine (dihydrosphingosine/DHS), the second step of de novo sphingolipid biosynthesis. The polypeptide is 3-ketodihydrosphingosine reductase (Bacteroides thetaiotaomicron (strain ATCC 29148 / DSM 2079 / JCM 5827 / CCUG 10774 / NCTC 10582 / VPI-5482 / E50)).